A 466-amino-acid chain; its full sequence is ATP synthase subunit beta (466 aa).

148 to 155 (GGAGVGKT) lines the ATP pocket.

Belongs to the ATPase alpha/beta chains family. As to quaternary structure, F-type ATPases have 2 components, CF(1) - the catalytic core - and CF(0) - the membrane proton channel. CF(1) has five subunits: alpha(3), beta(3), gamma(1), delta(1), epsilon(1). CF(0) has three main subunits: a(1), b(2) and c(9-12). The alpha and beta chains form an alternating ring which encloses part of the gamma chain. CF(1) is attached to CF(0) by a central stalk formed by the gamma and epsilon chains, while a peripheral stalk is formed by the delta and b chains.

The protein resides in the cell inner membrane. The catalysed reaction is ATP + H2O + 4 H(+)(in) = ADP + phosphate + 5 H(+)(out). Its function is as follows. Produces ATP from ADP in the presence of a proton gradient across the membrane. The catalytic sites are hosted primarily by the beta subunits. The protein is ATP synthase subunit beta of Xylella fastidiosa (strain M12).